We begin with the raw amino-acid sequence, 335 residues long: NAC domain-containing protein 40 (335 aa).

Residues 14–156 form the NAC domain; that stretch reads LFPGFRFSPT…ALVVCRLRKN (143 aa). Residues 112–162 mediate DNA binding; the sequence is VGTKRTLVFHIGRAPRGERTEWIMHEYCIHGAPQDALVVCRLRKNADFRAS. The span at 245-254 shows a compositional bias: polar residues; that stretch reads PTNPTHQETI. Residues 245–267 form a disordered region; sequence PTNPTHQETISSESSSKRSKCGI. Residues 313–333 traverse the membrane as a helical segment; that stretch reads VLATTVFLAILFSFFWTVLIA.

Proteolytically cleaved, probably by metalloprotease activity. This cleavage mediates a translocation from the plasma membrane to the nucleus. In terms of tissue distribution, expressed in seeds, leaves, roots and inflorescence. Expressed in roots, rosette leaves, cauline leaves, shoot apex, stems and flowers.

The protein resides in the cell membrane. The protein localises to the nucleus. In terms of biological role, transcriptional activator activated by proteolytic cleavage through regulated intramembrane proteolysis (RIP), probably via metalloprotease activity. Regulates gibberellic acid-mediated salt-responsive repression of seed germination and flowering via FT, thus delaying seed germination under high salinity conditions. The protein is NAC domain-containing protein 40 of Arabidopsis thaliana (Mouse-ear cress).